The following is a 598-amino-acid chain: UvrABC system protein C (598 aa).

The 81-residue stretch at 11-91 (QKPGVYIMHN…IKKYRPHYNI (81 aa)) folds into the GIY-YIG domain. The UVR domain maps to 195 to 230 (KTTIKKLKKDMNRYAKNMEFEKAAMLRDQIDTIKIT).

This sequence belongs to the UvrC family. Interacts with UvrB in an incision complex.

It is found in the cytoplasm. In terms of biological role, the UvrABC repair system catalyzes the recognition and processing of DNA lesions. UvrC both incises the 5' and 3' sides of the lesion. The N-terminal half is responsible for the 3' incision and the C-terminal half is responsible for the 5' incision. This Methanosphaera stadtmanae (strain ATCC 43021 / DSM 3091 / JCM 11832 / MCB-3) protein is UvrABC system protein C.